A 236-amino-acid chain; its full sequence is MRPDGRKNDELRPIKIEKNFIKNADGSVLIELGNTRVICTASIENKVPPFLKDQKKGWITAEYGMLPRSTPVRMLRESTSGRVGGRTHEIQRLIGRTLRAVVDLEKLGERTIWIDCDVIEADGGTRTASITGGYIALVEAVKKAMNAGMITENPIKDSIAAISVGIVLGEPRLDLCYAEDSQAEVDMNIVMTGSGKFIEIQGTAEIYPFSKENLLQLLSLAEKGIREIIRVINNLD.

Phosphate contacts are provided by residues arginine 86 and 124 to 126 (GTR).

It belongs to the RNase PH family. Homohexameric ring arranged as a trimer of dimers.

The catalysed reaction is tRNA(n+1) + phosphate = tRNA(n) + a ribonucleoside 5'-diphosphate. Functionally, phosphorolytic 3'-5' exoribonuclease that plays an important role in tRNA 3'-end maturation. Removes nucleotide residues following the 3'-CCA terminus of tRNAs; can also add nucleotides to the ends of RNA molecules by using nucleoside diphosphates as substrates, but this may not be physiologically important. Probably plays a role in initiation of 16S rRNA degradation (leading to ribosome degradation) during starvation. The polypeptide is Ribonuclease PH (Thermodesulfovibrio yellowstonii (strain ATCC 51303 / DSM 11347 / YP87)).